The chain runs to 223 residues: Protein-L-isoaspartate O-methyltransferase (223 aa).

Serine 70 is an active-site residue.

It belongs to the methyltransferase superfamily. L-isoaspartyl/D-aspartyl protein methyltransferase family.

Its subcellular location is the cytoplasm. The enzyme catalyses [protein]-L-isoaspartate + S-adenosyl-L-methionine = [protein]-L-isoaspartate alpha-methyl ester + S-adenosyl-L-homocysteine. Catalyzes the methyl esterification of L-isoaspartyl residues in peptides and proteins that result from spontaneous decomposition of normal L-aspartyl and L-asparaginyl residues. It plays a role in the repair and/or degradation of damaged proteins. The polypeptide is Protein-L-isoaspartate O-methyltransferase (Methylobacillus flagellatus (strain ATCC 51484 / DSM 6875 / VKM B-1610 / KT)).